The primary structure comprises 413 residues: Arginine biosynthesis bifunctional protein ArgJ (413 aa).

Substrate is bound by residues Thr-158, Lys-184, Thr-195, Glu-285, Asn-408, and Ser-413. Thr-195 serves as the catalytic Nucleophile.

It belongs to the ArgJ family. In terms of assembly, heterotetramer of two alpha and two beta chains.

It localises to the cytoplasm. The enzyme catalyses N(2)-acetyl-L-ornithine + L-glutamate = N-acetyl-L-glutamate + L-ornithine. It carries out the reaction L-glutamate + acetyl-CoA = N-acetyl-L-glutamate + CoA + H(+). The protein operates within amino-acid biosynthesis; L-arginine biosynthesis; L-ornithine and N-acetyl-L-glutamate from L-glutamate and N(2)-acetyl-L-ornithine (cyclic): step 1/1. It participates in amino-acid biosynthesis; L-arginine biosynthesis; N(2)-acetyl-L-ornithine from L-glutamate: step 1/4. In terms of biological role, catalyzes two activities which are involved in the cyclic version of arginine biosynthesis: the synthesis of N-acetylglutamate from glutamate and acetyl-CoA as the acetyl donor, and of ornithine by transacetylation between N(2)-acetylornithine and glutamate. This is Arginine biosynthesis bifunctional protein ArgJ from Mesorhizobium japonicum (strain LMG 29417 / CECT 9101 / MAFF 303099) (Mesorhizobium loti (strain MAFF 303099)).